Reading from the N-terminus, the 231-residue chain is NifU-like protein 1, chloroplastic (231 aa).

The N-terminal 69 residues, 1 to 69 (MMASLATSIS…SSQGEKISPL (69 aa)), are a transit peptide targeting the chloroplast.

The protein belongs to the NifU family. In terms of assembly, homodimer; disulfide-linked. Predominantly expressed in floral stalks and siliques. Expressed in leaves, cauline leaves, flower stalks and flowers (at protein level).

The protein resides in the plastid. It localises to the chloroplast stroma. In terms of biological role, molecular scaffold for [Fe-S] cluster assembly of chloroplastic iron-sulfur proteins. The polypeptide is NifU-like protein 1, chloroplastic (NIFU1) (Arabidopsis thaliana (Mouse-ear cress)).